A 1264-amino-acid chain; its full sequence is Imitation switch two complex protein 1 (1264 aa).

Positions 23 to 130 (VQVWHIEETG…GEVVYLRKQK (108 aa)) constitute a WAC domain. 5 disordered regions span residues 130–153 (KDSS…VEIN), 275–374 (PVVA…PANA), 482–508 (QEIE…NPSD), 627–655 (ATEV…SEER), and 803–825 (LNKT…SESN). Over residues 132 to 147 (SSTTSSNSQQSTPQPD) the composition is skewed to low complexity. Composition is skewed to polar residues over residues 280–289 (RSNSANVSSP) and 299–310 (KSSGKSNTSNDA). Residues 423–483 (FDSFGKLLQA…IRTQTSKEQE (61 aa)) form the DDT domain.

Component of the ISW2 complex, which at least consists of ISW2, ITC1, DLS1 and DPB4. May form a stable subcomplex with ISW2.

It localises to the nucleus. In terms of biological role, functions as a component of the ISW2 complex, which acts in remodeling the chromatin by catalyzing an ATP-dependent alteration in the structure of nucleosomal DNA. The ISW2 complex is involved in coordinating transcriptional repression and in inheritance of telomeric silencing. It is involved in repression of MAT a-specific genes, INO1, and early meiotic genes during mitotic growth dependent upon transcription factor UME6 and in a parallel pathway to the RPD3-SIN3 histone deacetylase complex. ITC1 is required for nucleosome-stimulated ATPase activity and chromatin-remodeling activity of the complex. Required for the repression of MATa a-specific genes. The chain is Imitation switch two complex protein 1 (ITC1) from Saccharomyces cerevisiae (strain ATCC 204508 / S288c) (Baker's yeast).